Consider the following 404-residue polypeptide: S-adenosylmethionine synthase (404 aa).

ATP is bound at residue His17. Asp19 is a Mg(2+) binding site. Residue Glu45 coordinates K(+). L-methionine-binding residues include Glu58 and Gln101. Positions 101 to 111 (QSPDINRGVDR) are flexible loop. ATP contacts are provided by residues 172 to 174 (DAK), 245 to 246 (RF), Asp254, 260 to 261 (RK), Ala277, and Lys281. An L-methionine-binding site is contributed by Asp254. Residue Lys285 coordinates L-methionine.

It belongs to the AdoMet synthase family. Homotetramer; dimer of dimers. Mg(2+) is required as a cofactor. Requires K(+) as cofactor.

It is found in the cytoplasm. The enzyme catalyses L-methionine + ATP + H2O = S-adenosyl-L-methionine + phosphate + diphosphate. It participates in amino-acid biosynthesis; S-adenosyl-L-methionine biosynthesis; S-adenosyl-L-methionine from L-methionine: step 1/1. Its function is as follows. Catalyzes the formation of S-adenosylmethionine (AdoMet) from methionine and ATP. The overall synthetic reaction is composed of two sequential steps, AdoMet formation and the subsequent tripolyphosphate hydrolysis which occurs prior to release of AdoMet from the enzyme. This chain is S-adenosylmethionine synthase, found in Pelodictyon phaeoclathratiforme (strain DSM 5477 / BU-1).